Consider the following 856-residue polypeptide: MRVKEKYQHLWRWGWRWGTMLLGMLMICSATEKLWVTVYYGVPVWKEATTTLFCASDAKAYDTEVHNVWATHACVPTDPNPQEVVLVNVTENFNMWKNDMVEQMHEDIISLWDQSLKPCVKLTPLCVSLKCTDLKNDTNTNSSSGRMIMEKGEIKNCSFNISTSIRGKVQKEYAFFYKLDIIPIDNDTTSYTLTSCNTSVITQACPKVSFEPIPIHYCAPAGFAILKCNNKTFNGTGPCTNVSTVQCTHGIRPVVSTQLLLNGSLAEEEVVIRSANFTDNAKTIIVQLNQSVEINCTRPNNNTRKSIRIQRGPGRAFVTIGKIGNMRQAHCNISRAKWNNTLKQIDSKLREQFGNNKTIIFKQSSGGDPEIVTHSFNCGGEFFYCNSTQLFNSTWFNSTWSTKGSNNTEGSDTITLPCRIKQIINMWQEVGKAMYAPPISGQIRCSSNITGLLLTRDGGNSNNESEIFRPGGGDMRDNWRSELYKYKVVKIEPLGVAPTKAKRRVVQREKRAVGIGALFLGFLGAAGSTMGAASMTLTVQARQLLSGIVQQQNNLLRAIEAQQHLLQLTVWGIKQLQARILAVERYLKDQQLLGIWGCSGKLICTTAVPWNASWSNKSLEQIWNNMTWMEWDREINNYTSLIHSLIEESQNQQEKNEQELLELDKWASLWNWFNITNWLWYIKLFIMIVGGLVGLRIVFAVLSVVNRVRQGYSPLSFQTHLPIPRGPDRPEGIEEEGGERDRDRSIRLVNGSLALIWDDLRSLCLFSYHRLRDLLLIVTRIVELLGRRGWEALKYWWNLLQYWSQELKNSAVSLLNATAIAVAEGTDRVIEVVQGAYRAIRHIPRRIRQGLERILL.

A signal peptide spans 1–32 (MRVKEKYQHLWRWGWRWGTMLLGMLMICSATE). Over 33–684 (KLWVTVYYGV…ITNWLWYIKL (652 aa)) the chain is Extracellular. An intrachain disulfide couples C54 to C74. Residues N88, N136, N141, N156, N160, N186, N197, N230, N234, N241, N262, N276, N289, N295, N301, N332, N339, and N356 are each glycosylated (N-linked (GlcNAc...) asparagine; by host). Disulfide bonds link C119-C205, C126-C196, C131-C157, C218-C247, and C228-C239. The segment at 131-156 (CTDLKNDTNTNSSSGRMIMEKGEIKN) is V1. Residues 157 to 196 (CSFNISTSIRGKVQKEYAFFYKLDIIPIDNDTTSYTLTSC) are V2. The V3 stretch occupies residues 296 to 330 (CTRPNNNTRKSIRIQRGPGRAFVTIGKIGNMRQAH). C296 and C331 are disulfide-bonded. The segment at 364–374 (SSGGDPEIVTH) is CD4-binding loop. 2 cysteine pairs are disulfide-bonded: C378/C445 and C385/C418. The V4 stretch occupies residues 385-418 (CNSTQLFNSTWFNSTWSTKGSNNTEGSDTITLPC). Residues N386, N392, N397, N406, N448, and N463 are each glycosylated (N-linked (GlcNAc...) asparagine; by host). V5 stretches follow at residues 461 to 471 (SNNESEIFRPG) and 463 to 471 (NESEIFRPG). Residues 512–532 (AVGIGALFLGFLGAAGSTMGA) form a fusion peptide region. Residues 574-592 (KQLQARILAVERYLKDQQL) form an immunosuppression region. C598 and C604 are joined by a disulfide. Residues N611, N616, N625, and N637 are each glycosylated (N-linked (GlcNAc...) asparagine; by host). Residues 633-667 (REINNYTSLIHSLIEESQNQQEKNEQELLELDKWA) are a coiled coil. Positions 662–667 (ELDKWA) are involved in GalCer binding. An MPER; binding to GalCer region spans residues 662-683 (ELDKWASLWNWFNITNWLWYIK). N674 carries an N-linked (GlcNAc...) asparagine; by host glycan. Residues 685-705 (FIMIVGGLVGLRIVFAVLSVV) traverse the membrane as a helical segment. Residues 706–856 (NRVRQGYSPL…IRQGLERILL (151 aa)) lie on the Cytoplasmic side of the membrane. The YXXL motif; contains endocytosis signal motif lies at 712 to 715 (YSPL). The interval 721–740 (LPIPRGPDRPEGIEEEGGER) is disordered. The S-palmitoyl cysteine; by host moiety is linked to residue C764. The Di-leucine internalization motif signature appears at 855–856 (LL).

The protein belongs to the HIV-1 env protein family. As to quaternary structure, the mature envelope protein (Env) consists of a homotrimer of non-covalently associated gp120-gp41 heterodimers. The resulting complex protrudes from the virus surface as a spike. There seems to be as few as 10 spikes on the average virion. Interacts with host CD4, CCR5 and CXCR4. Gp120 also interacts with the C-type lectins CD209/DC-SIGN and CLEC4M/DC-SIGNR (collectively referred to as DC-SIGN(R)). Gp120 and gp41 interact with GalCer. Gp120 interacts with host ITGA4/ITGB7 complex; on CD4+ T-cells, this interaction results in rapid activation of integrin ITGAL/LFA-1, which facilitates efficient cell-to-cell spreading of HIV-1. Gp120 interacts with cell-associated heparan sulfate; this interaction increases virus infectivity on permissive cells and may be involved in infection of CD4- cells. The mature envelope protein (Env) consists of a homotrimer of non-covalently associated gp120-gp41 heterodimers. The resulting complex protrudes from the virus surface as a spike. There seems to be as few as 10 spikes on the average virion. Post-translationally, highly glycosylated by host. The high number of glycan on the protein is reffered to as 'glycan shield' because it contributes to hide protein sequence from adaptive immune system. In terms of processing, palmitoylation of the transmembrane protein and of Env polyprotein (prior to its proteolytic cleavage) is essential for their association with host cell membrane lipid rafts. Palmitoylation is therefore required for envelope trafficking to classical lipid rafts, but not for viral replication. Specific enzymatic cleavages in vivo yield mature proteins. Envelope glycoproteins are synthesized as an inactive precursor that is heavily N-glycosylated and processed likely by host cell furin in the Golgi to yield the mature SU and TM proteins. The cleavage site between SU and TM requires the minimal sequence [KR]-X-[KR]-R. About 2 of the 9 disulfide bonds of gp41 are reduced by P4HB/PDI, following binding to CD4 receptor.

The protein resides in the virion membrane. It is found in the host cell membrane. It localises to the host endosome membrane. Its function is as follows. Oligomerizes in the host endoplasmic reticulum into predominantly trimers. In a second time, gp160 transits in the host Golgi, where glycosylation is completed. The precursor is then proteolytically cleaved in the trans-Golgi and thereby activated by cellular furin or furin-like proteases to produce gp120 and gp41. Attaches the virus to the host lymphoid cell by binding to the primary receptor CD4. This interaction induces a structural rearrangement creating a high affinity binding site for a chemokine coreceptor like CXCR4 and/or CCR5. Acts as a ligand for CD209/DC-SIGN and CLEC4M/DC-SIGNR, which are respectively found on dendritic cells (DCs), and on endothelial cells of liver sinusoids and lymph node sinuses. These interactions allow capture of viral particles at mucosal surfaces by these cells and subsequent transmission to permissive cells. HIV subverts the migration properties of dendritic cells to gain access to CD4+ T-cells in lymph nodes. Virus transmission to permissive T-cells occurs either in trans (without DCs infection, through viral capture and transmission), or in cis (following DCs productive infection, through the usual CD4-gp120 interaction), thereby inducing a robust infection. In trans infection, bound virions remain infectious over days and it is proposed that they are not degraded, but protected in non-lysosomal acidic organelles within the DCs close to the cell membrane thus contributing to the viral infectious potential during DCs' migration from the periphery to the lymphoid tissues. On arrival at lymphoid tissues, intact virions recycle back to DCs' cell surface allowing virus transmission to CD4+ T-cells. In terms of biological role, acts as a class I viral fusion protein. Under the current model, the protein has at least 3 conformational states: pre-fusion native state, pre-hairpin intermediate state, and post-fusion hairpin state. During fusion of viral and target intracellular membranes, the coiled coil regions (heptad repeats) assume a trimer-of-hairpins structure, positioning the fusion peptide in close proximity to the C-terminal region of the ectodomain. The formation of this structure appears to drive apposition and subsequent fusion of viral and target cell membranes. Complete fusion occurs in host cell endosomes and is dynamin-dependent, however some lipid transfer might occur at the plasma membrane. The virus undergoes clathrin-dependent internalization long before endosomal fusion, thus minimizing the surface exposure of conserved viral epitopes during fusion and reducing the efficacy of inhibitors targeting these epitopes. Membranes fusion leads to delivery of the nucleocapsid into the cytoplasm. The sequence is that of Envelope glycoprotein gp160 from Homo sapiens (Human).